A 475-amino-acid chain; its full sequence is CAAX prenyl protease 1 homolog (475 aa).

The Lumenal segment spans residues Met1–Arg18. Residues Ile19–Gln39 traverse the membrane as a helical segment. Over Arg40–Ser81 the chain is Nuclear. A helical transmembrane segment spans residues Gly82–Trp102. The Lumenal portion of the chain corresponds to Arg103–Ser123. Residues Leu124–Tyr144 traverse the membrane as a helical segment. Over Asn145–Lys170 the chain is Nuclear. Residues Phe171–Ile191 traverse the membrane as a helical segment. The Lumenal segment spans residues Gly192–Tyr195. A helical membrane pass occupies residues Phe196 to Ala216. The Nuclear segment spans residues Asp217–Lys347. A disordered region spans residues Asp293–Lys314. Basic and acidic residues predominate over residues Met300–Lys314. His335 contacts Zn(2+). Glu336 is a catalytic residue. A Zn(2+)-binding site is contributed by His339. The chain crosses the membrane as a helical span at residues Asn348–Gly368. Topologically, residues Arg369 to Gln382 are lumenal. A helical transmembrane segment spans residues Pro383–Phe405. The Nuclear portion of the chain corresponds to Cys406–Asp475. Glu415 contributes to the Zn(2+) binding site.

It belongs to the peptidase M48A family. It depends on Zn(2+) as a cofactor.

It is found in the endoplasmic reticulum membrane. It localises to the nucleus inner membrane. Its subcellular location is the early endosome membrane. The protein localises to the late endosome membrane. The enzyme catalyses Hydrolyzes the peptide bond -P2-(S-farnesyl or geranylgeranyl)C-P1'-P2'-P3'-COOH where P1' and P2' are amino acids with aliphatic side chains and P3' is any C-terminal residue.. Its activity is regulated as follows. Inhibited by HIV protease inhibitors, such as lopinavir, tipranavir and nelfinavir, leading to defects in lamin A/LMNA maturation and accumulation of prelamin-A/C precursors in cells. This causes defects in nuclear envelope integrity and release of DNA in the cytosol, activating the AIM2 inflammasome. Its function is as follows. Transmembrane metalloprotease whose catalytic activity is critical for processing lamin A/LMNA on the inner nuclear membrane and clearing clogged translocons on the endoplasmic reticulum. Proteolytically removes the C-terminal three residues of farnesylated proteins. Also plays an antiviral role independently of its protease activity by restricting enveloped RNA and DNA viruses. Mechanistically, controls IFITM antiviral pathway to hinder viruses from breaching the endosomal barrier by modulating membrane fluidity. The protein is CAAX prenyl protease 1 homolog of Mus musculus (Mouse).